The primary structure comprises 167 residues: Small ribosomal subunit protein uS9 (167 aa).

A disordered region spans residues 136–167; the sequence is KRAGFLTRDPRATERKKYGLKKARKAPQYSKR. Over residues 143-152 the composition is skewed to basic and acidic residues; sequence RDPRATERKK. Residues 153–167 are compositionally biased toward basic residues; that stretch reads YGLKKARKAPQYSKR.

The protein belongs to the universal ribosomal protein uS9 family.

The polypeptide is Small ribosomal subunit protein uS9 (Nocardia farcinica (strain IFM 10152)).